A 208-amino-acid polypeptide reads, in one-letter code: Large ribosomal subunit protein uL4 (208 aa).

A disordered region spans residues 58-77 (RGGGRKPWRQKGTGRARQGS). Basic residues predominate over residues 60 to 71 (GGRKPWRQKGTG).

Belongs to the universal ribosomal protein uL4 family. Part of the 50S ribosomal subunit.

One of the primary rRNA binding proteins, this protein initially binds near the 5'-end of the 23S rRNA. It is important during the early stages of 50S assembly. It makes multiple contacts with different domains of the 23S rRNA in the assembled 50S subunit and ribosome. Functionally, forms part of the polypeptide exit tunnel. This Caldicellulosiruptor saccharolyticus (strain ATCC 43494 / DSM 8903 / Tp8T 6331) protein is Large ribosomal subunit protein uL4.